The primary structure comprises 908 residues: Bifunctional uridylyltransferase/uridylyl-removing enzyme (908 aa).

Residues 1–360 are uridylyltransferase; it reads MFDTPAVFAR…LERIFRRRRR (360 aa). Residues 361–718 are uridylyl-removing; that stretch reads IKQGYKVVRG…LDPDEDRDAT (358 aa). The HD domain maps to 477–599; sequence VDEHTIQTIV…VQTTKRLDLL (123 aa). ACT domains follow at residues 719 to 801 and 829 to 904; these read RACF…LKSR and IIEV…GAER.

This sequence belongs to the GlnD family. Mg(2+) is required as a cofactor.

It catalyses the reaction [protein-PII]-L-tyrosine + UTP = [protein-PII]-uridylyl-L-tyrosine + diphosphate. The catalysed reaction is [protein-PII]-uridylyl-L-tyrosine + H2O = [protein-PII]-L-tyrosine + UMP + H(+). Uridylyltransferase (UTase) activity is inhibited by glutamine, while glutamine activates uridylyl-removing (UR) activity. Functionally, modifies, by uridylylation and deuridylylation, the PII regulatory proteins (GlnB and homologs), in response to the nitrogen status of the cell that GlnD senses through the glutamine level. Under low glutamine levels, catalyzes the conversion of the PII proteins and UTP to PII-UMP and PPi, while under higher glutamine levels, GlnD hydrolyzes PII-UMP to PII and UMP (deuridylylation). Thus, controls uridylylation state and activity of the PII proteins, and plays an important role in the regulation of nitrogen assimilation and metabolism. The chain is Bifunctional uridylyltransferase/uridylyl-removing enzyme from Ruegeria pomeroyi (strain ATCC 700808 / DSM 15171 / DSS-3) (Silicibacter pomeroyi).